The chain runs to 589 residues: Phosphoenolpyruvate carboxykinase [GTP] (589 aa).

Substrate-binding positions include Arg75 and 207-209; that span reads YGG. Mn(2+) contacts are provided by Lys216 and His236. Ser258 lines the substrate pocket. A GTP-binding site is contributed by 259–264; that stretch reads ASGKTN. The active site involves Ser260. Asp287 is a binding site for Mn(2+). Residue 374 to 376 participates in substrate binding; it reads NSR. GTP contacts are provided by residues Arg376, Arg407, and 500 to 503; that span reads FAEN.

Belongs to the phosphoenolpyruvate carboxykinase [GTP] family. Requires Mn(2+) as cofactor.

The protein resides in the cytoplasm. It carries out the reaction oxaloacetate + GTP = phosphoenolpyruvate + GDP + CO2. The protein operates within carbohydrate biosynthesis; gluconeogenesis. In terms of biological role, catalyzes the conversion of oxaloacetate (OAA) to phosphoenolpyruvate (PEP), the rate-limiting step in the metabolic pathway that produces glucose from lactate and other precursors derived from the citric acid cycle. The sequence is that of Phosphoenolpyruvate carboxykinase [GTP] from Thermoplasma volcanium (strain ATCC 51530 / DSM 4299 / JCM 9571 / NBRC 15438 / GSS1).